A 561-amino-acid polypeptide reads, in one-letter code: Type II methyltransferase M.BstVI (561 aa).

The protein belongs to the N(4)/N(6)-methyltransferase family.

The catalysed reaction is a 2'-deoxyadenosine in DNA + S-adenosyl-L-methionine = an N(6)-methyl-2'-deoxyadenosine in DNA + S-adenosyl-L-homocysteine + H(+). In terms of biological role, a gamma subtype methylase, recognizes the double-stranded sequence 5'-CTCGAG-3', methylates A-5 on both strands, and protects the DNA from cleavage by the BstVI endonuclease. The polypeptide is Type II methyltransferase M.BstVI (Geobacillus stearothermophilus (Bacillus stearothermophilus)).